A 270-amino-acid polypeptide reads, in one-letter code: Pantoate kinase (270 aa).

It belongs to the GHMP kinase family. PoK subfamily.

The enzyme catalyses (R)-pantoate + ATP = (R)-4-phosphopantoate + ADP + H(+). Its pathway is cofactor biosynthesis; coenzyme A biosynthesis. Its function is as follows. Phosphorylates (R)-pantoate to form (R)-4-phosphopantoate in the CoA biosynthesis pathway. This Methanocaldococcus jannaschii (strain ATCC 43067 / DSM 2661 / JAL-1 / JCM 10045 / NBRC 100440) (Methanococcus jannaschii) protein is Pantoate kinase.